The chain runs to 262 residues: Sulfur carrier protein FdhD (262 aa).

The active-site Cysteine persulfide intermediate is the Cys105. Mo-bis(molybdopterin guanine dinucleotide) is bound at residue 246-251 (FVRKNR).

This sequence belongs to the FdhD family.

It localises to the cytoplasm. Required for formate dehydrogenase (FDH) activity. Acts as a sulfur carrier protein that transfers sulfur from IscS to the molybdenum cofactor prior to its insertion into FDH. In Picrophilus torridus (strain ATCC 700027 / DSM 9790 / JCM 10055 / NBRC 100828 / KAW 2/3), this protein is Sulfur carrier protein FdhD.